Here is a 167-residue protein sequence, read N- to C-terminus: S-ribosylhomocysteine lyase (167 aa).

Fe cation contacts are provided by His54, His58, and Cys128.

The protein belongs to the LuxS family. Homodimer. Fe cation is required as a cofactor.

It carries out the reaction S-(5-deoxy-D-ribos-5-yl)-L-homocysteine = (S)-4,5-dihydroxypentane-2,3-dione + L-homocysteine. Involved in the synthesis of autoinducer 2 (AI-2) which is secreted by bacteria and is used to communicate both the cell density and the metabolic potential of the environment. The regulation of gene expression in response to changes in cell density is called quorum sensing. Catalyzes the transformation of S-ribosylhomocysteine (RHC) to homocysteine (HC) and 4,5-dihydroxy-2,3-pentadione (DPD). This Haemophilus influenzae (strain 86-028NP) protein is S-ribosylhomocysteine lyase.